The following is a 438-amino-acid chain: Chromosomal replication initiator protein DnaA (438 aa).

Residues 1–71 (MTELDSLWEA…VEIVYQRTGQ (71 aa)) form a domain I, interacts with DnaA modulators region. The segment at 71–101 (QEIRPDYVLATDPTPLAQTPPRPQSTFKEET) is domain II. Positions 81-100 (TDPTPLAQTPPRPQSTFKEE) are disordered. A domain III, AAA+ region region spans residues 102-318 (PLNPEYTFQT…GALMRIRVFS (217 aa)). Residues G146, G148, K149, and T150 each coordinate ATP. Residues 319–438 (ELHQQPITLK…LVKLKNDLQA (120 aa)) form a domain IV, binds dsDNA region.

The protein belongs to the DnaA family. As to quaternary structure, oligomerizes as a right-handed, spiral filament on DNA at oriC.

It localises to the cytoplasm. Functionally, plays an essential role in the initiation and regulation of chromosomal replication. ATP-DnaA binds to the origin of replication (oriC) to initiate formation of the DNA replication initiation complex once per cell cycle. Binds the DnaA box (a 9 base pair repeat at the origin) and separates the double-stranded (ds)DNA. Forms a right-handed helical filament on oriC DNA; dsDNA binds to the exterior of the filament while single-stranded (ss)DNA is stabiized in the filament's interior. The ATP-DnaA-oriC complex binds and stabilizes one strand of the AT-rich DNA unwinding element (DUE), permitting loading of DNA polymerase. After initiation quickly degrades to an ADP-DnaA complex that is not apt for DNA replication. Binds acidic phospholipids. This is Chromosomal replication initiator protein DnaA from Limosilactobacillus fermentum (strain NBRC 3956 / LMG 18251) (Lactobacillus fermentum).